Here is a 325-residue protein sequence, read N- to C-terminus: Diacylglycerol acyltransferase/mycolyltransferase Ag85B (325 aa).

The first 38 residues, 1-38 (MTFIDKIRGHWARRMTVAAVAALLLPGLVGVVGGSATA), serve as a signal peptide directing secretion. Residue 82 to 83 (LR) coordinates substrate. The fibronectin-binding stretch occupies residues 98-108 (FEMFLDSGLSV). A disulfide bridge connects residues C127 and C132. S166 contacts substrate. S166 (nucleophile) is an active-site residue. E272 is an active-site residue. Substrate contacts are provided by residues 274–277 (LTIR) and 304–306 (HNW). Residue H304 is part of the active site.

It belongs to the mycobacterial A85 antigen family.

The protein resides in the secreted. It catalyses the reaction 2 alpha,alpha'-trehalose 6-mycolate = alpha,alpha'-trehalose 6,6'-bismycolate + alpha,alpha-trehalose. The catalysed reaction is an acyl-CoA + a 1,2-diacyl-sn-glycerol = a triacyl-sn-glycerol + CoA. Functionally, the antigen 85 proteins (FbpA, FbpB, FbpC) are responsible for the high affinity of mycobacteria for fibronectin, a large adhesive glycoprotein. They also help to maintain the integrity of the cell wall by catalyzing the transfer of mycolic acids to cell wall arabinogalactan and through the synthesis of alpha,alpha-trehalose dimycolate (TDM, cord factor). They catalyze the transfer of a mycoloyl residue from one molecule of alpha,alpha-trehalose monomycolate (TMM) to another TMM, leading to the formation of TDM. The polypeptide is Diacylglycerol acyltransferase/mycolyltransferase Ag85B (fbpB) (Mycolicibacterium smegmatis (strain ATCC 700084 / mc(2)155) (Mycobacterium smegmatis)).